Here is a 98-residue protein sequence, read N- to C-terminus: MSVSIKPLEDRIVIKQVEAEQTTASGLVIPDTAKEKPQEGVVEAVGPGRIDDNGNRVPLDVAVGDKVIYSKYGGTEVKFGGQDYLVLSARDVLAVVVR.

Belongs to the GroES chaperonin family. In terms of assembly, heptamer of 7 subunits arranged in a ring. Interacts with the chaperonin GroEL.

The protein localises to the cytoplasm. In terms of biological role, together with the chaperonin GroEL, plays an essential role in assisting protein folding. The GroEL-GroES system forms a nano-cage that allows encapsulation of the non-native substrate proteins and provides a physical environment optimized to promote and accelerate protein folding. GroES binds to the apical surface of the GroEL ring, thereby capping the opening of the GroEL channel. This Leifsonia xyli subsp. xyli (strain CTCB07) protein is Co-chaperonin GroES.